The following is a 1217-amino-acid chain: Endonuclease YhcR (1217 aa).

The first 46 residues, 1 to 46 (MLSVEMISRQNRCHYVYKGGNMMRRILHIVLITALMFLNVMYTFEA), serve as a signal peptide directing secretion. Residues 376-517 (GEYEGIVDRV…KKDQKGIWNE (142 aa)) enclose the TNase-like domain. Active-site residues include arginine 404, glutamate 412, and arginine 460. Positions 590 to 828 (LRILSMNDLH…VIFAAHNHQV (239 aa)) are phosphoesterase. 6 residues coordinate a divalent metal cation: aspartate 597, histidine 599, aspartate 647, asparagine 680, histidine 792, and histidine 824. Positions 829–1085 (VNGEVNGKLI…AYTKEGRIKL (257 aa)) are 5'-nucleotidase. Residues phenylalanine 965 and 1035-1042 (FMATATGA) each bind substrate. The disordered stretch occupies residues 1087–1142 (EASDIEDPVTEDPITEEPGDDPGTEDPIKEDPRPGEDLPDIKETPGTAPVHQLPPS). Acidic residues predominate over residues 1089 to 1110 (SDIEDPVTEDPITEEPGDDPGT). Residues 1112–1129 (DPIKEDPRPGEDLPDIKE) show a composition bias toward basic and acidic residues. The LPXTG sorting signal motif lies at 1182–1186 (LPDTS). Threonine 1185 bears the Pentaglycyl murein peptidoglycan amidated threonine mark. The propeptide at 1186–1217 (SAGYYNFMVIGAAVTLSGTYLYVRRKRSASRT) is removed by sortase.

In the C-terminal section; belongs to the 5'-nucleotidase family. The cofactor is Ca(2+). Requires Mn(2+) as cofactor.

The protein resides in the secreted. Its subcellular location is the cell wall. Its activity is regulated as follows. Requires a minimum of 0.1 mM of calcium for a significant activity. Maximal activity was observed with concentrations of calcium between 1 to 5 mM. Is 10-fold less active with the corresponding concentrations of manganese. Inhibited by NaCl at concentrations of 100 mM and higher. In terms of biological role, sugar-nonspecific endonuclease that yields nucleotide 3'-monophosphate products. No 5'-nucleotidase activity was detected, using 5'-AMP as the substrate, in the presence of diverse divalent metals and with various pH values. This Bacillus subtilis (strain 168) protein is Endonuclease YhcR (yhcR).